A 385-amino-acid chain; its full sequence is 3-hydroxyisobutyryl-CoA hydrolase, mitochondrial (385 aa).

Substrate contacts are provided by Glu120, Gly145, Glu168, and Asp176.

It belongs to the enoyl-CoA hydratase/isomerase family.

The protein resides in the mitochondrion. It carries out the reaction 3-hydroxy-2-methylpropanoyl-CoA + H2O = 3-hydroxy-2-methylpropanoate + CoA + H(+). Its pathway is amino-acid degradation; L-valine degradation. Functionally, hydrolyzes 3-hydroxyisobutyryl-CoA (HIBYL-CoA), a saline catabolite. Has high activity toward isobutyryl-CoA. Could be an isobutyryl-CoA dehydrogenase that functions in valine catabolism. Also hydrolyzes 3-hydroxypropanoyl-CoA. The polypeptide is 3-hydroxyisobutyryl-CoA hydrolase, mitochondrial (HIBCH) (Gallus gallus (Chicken)).